The primary structure comprises 267 residues: MAQVSMKQLLEAGVHFGHQTKRWNPKMKPYIFGARNGIYIIDLQKTVRYFKSAYQFIRETVQNGDKVLFVGTKKQAQEAIREETARADQFYIDNRWLGGMLTNFATIKKSIERLKKIEVMAQDGTYELLTKKEALNLEREREKLEKTLGGIKGMNKLPGAIFVIDPKKETIAVKEARKLGIPVVAVVDTNCDPDDIDYIIPGNDDAIRAIRLFAAKMADACIDGAQAREAAIRAESDKAETDKVEVEGKGEAPAAEAAEVVESADKA.

Over residues 233 to 250 (RAESDKAETDKVEVEGKG) the composition is skewed to basic and acidic residues. Residues 233 to 267 (RAESDKAETDKVEVEGKGEAPAAEAAEVVESADKA) form a disordered region. A compositionally biased stretch (low complexity) spans 251-261 (EAPAAEAAEVV).

This sequence belongs to the universal ribosomal protein uS2 family.

In Syntrophotalea carbinolica (strain DSM 2380 / NBRC 103641 / GraBd1) (Pelobacter carbinolicus), this protein is Small ribosomal subunit protein uS2.